The sequence spans 804 residues: Pentatricopeptide repeat-containing protein At4g35130, chloroplastic (804 aa).

The N-terminal 19 residues, 1–19 (MAATLLSQCYRIYNSDACK), are a transit peptide targeting the chloroplast. 16 PPR repeats span residues 63–93 (NDPA…MNKA), 94–128 (DAFL…GVKA), 129–163 (DTFT…GFVS), 164–194 (DVYV…MPER), 195–229 (DIVS…GFKP), 230–264 (DRFS…RIET), 266–296 (DVMV…MIQR), 297–332 (NIVA…GLQP), 333–363 (DVIT…GFLP), 364–394 (HMVL…MAEK), 395–429 (NVIS…SLVP), 430–464 (DSTT…RYWS), 465–495 (NTII…ILLK), 496–530 (DVVS…RVNP), 531–561 (NKST…MKRE), and 567–597 (GIEH…MPFV). The type E motif stretch occupies residues 602-677 (IWGSLLNASR…TSSRSTVEAK (76 aa)). The segment at 678-708 (GKSHVFTNGDRSHVATNKIYEVLDVVSRMVG) is type E(+) motif. The segment at 710–804 (EDIYVHCVSR…NGRCSCGNYW (95 aa)) is type DYW motif.

This sequence belongs to the PPR family. PCMP-H subfamily.

Its subcellular location is the plastid. The protein localises to the chloroplast. The chain is Pentatricopeptide repeat-containing protein At4g35130, chloroplastic (PCMP-H27) from Arabidopsis thaliana (Mouse-ear cress).